Here is a 478-residue protein sequence, read N- to C-terminus: Probable serine carboxypeptidase CPVL (478 aa).

Positions 1-22 (MVRAKWKMVVSLILFMVSPGDG) are cleaved as a signal peptide. Asn-83 and Asn-134 each carry an N-linked (GlcNAc...) asparagine glycan. The active site involves Ser-206. N-linked (GlcNAc...) asparagine glycans are attached at residues Asn-309 and Asn-350. Catalysis depends on residues Asp-390 and His-450.

Belongs to the peptidase S10 family.

Its function is as follows. May be involved in the digestion of phagocytosed particles in the lysosome, participation in an inflammatory protease cascade, and trimming of peptides for antigen presentation. The polypeptide is Probable serine carboxypeptidase CPVL (Cpvl) (Mus musculus (Mouse)).